We begin with the raw amino-acid sequence, 109 residues long: Ribonuclease P protein component 2 (109 aa).

The protein belongs to the eukaryotic/archaeal RNase P protein component 2 family. Consists of a catalytic RNA component and at least 4-5 protein subunits.

It localises to the cytoplasm. The catalysed reaction is Endonucleolytic cleavage of RNA, removing 5'-extranucleotides from tRNA precursor.. Part of ribonuclease P, a protein complex that generates mature tRNA molecules by cleaving their 5'-ends. This chain is Ribonuclease P protein component 2, found in Archaeoglobus fulgidus (strain ATCC 49558 / DSM 4304 / JCM 9628 / NBRC 100126 / VC-16).